The following is a 1226-amino-acid chain: Methionine synthase (1226 aa).

Residues 7–327 (KVQIEKQLSE…EHIRQMALVV (321 aa)) form the Hcy-binding domain. Positions 249, 312, and 313 each coordinate Zn(2+). A Pterin-binding domain is found at 358–619 (FINVGERTNV…VPEDLREAVE (262 aa)). A B12-binding N-terminal domain is found at 652–746 (SALEWRDWPV…FINASKEVGA (95 aa)). Residues glutamate 696, 758–762 (GDVHD), histidine 761, serine 806, threonine 810, and alanine 862 each bind methylcob(III)alamin. Residues 748–883 (NGKILLATVK…SDELKPSFVE (136 aa)) enclose the B12-binding domain. The AdoMet activation domain occupies 899–1226 (KQPRTKPVTL…AEKWLGPNLN (328 aa)). S-adenosyl-L-methionine-binding positions include aspartate 949, arginine 1137, and 1192–1193 (YF).

This sequence belongs to the vitamin-B12 dependent methionine synthase family. Requires methylcob(III)alamin as cofactor. Zn(2+) serves as cofactor.

The catalysed reaction is (6S)-5-methyl-5,6,7,8-tetrahydrofolate + L-homocysteine = (6S)-5,6,7,8-tetrahydrofolate + L-methionine. It participates in amino-acid biosynthesis; L-methionine biosynthesis via de novo pathway; L-methionine from L-homocysteine (MetH route): step 1/1. Its function is as follows. Catalyzes the transfer of a methyl group from methyl-cobalamin to homocysteine, yielding enzyme-bound cob(I)alamin and methionine. Subsequently, remethylates the cofactor using methyltetrahydrofolate. The chain is Methionine synthase (metH) from Aliivibrio fischeri (strain ATCC 700601 / ES114) (Vibrio fischeri).